The primary structure comprises 185 residues: Elongation factor P (185 aa).

Belongs to the elongation factor P family.

Its subcellular location is the cytoplasm. It participates in protein biosynthesis; polypeptide chain elongation. Functionally, involved in peptide bond synthesis. Stimulates efficient translation and peptide-bond synthesis on native or reconstituted 70S ribosomes in vitro. Probably functions indirectly by altering the affinity of the ribosome for aminoacyl-tRNA, thus increasing their reactivity as acceptors for peptidyl transferase. This chain is Elongation factor P, found in Mesomycoplasma hyopneumoniae (strain 232) (Mycoplasma hyopneumoniae).